A 147-amino-acid polypeptide reads, in one-letter code: MVHFTAEEKNAITTIWGKVNVEETGGEALGRLLVVYPWTQRFFDSFGNLSSASAILGNPKVKAHGKKVLTSFGDAVKNLDNLKGTFSKLSELHCDKLHVDPENFRLLGNVLVIVMAAHFNKEFTPEVQAAFQKLVTGVANALAHKYH.

Positions 3 to 147 (HFTAEEKNAI…VANALAHKYH (145 aa)) constitute a Globin domain. Residue S51 is modified to Phosphoserine. H64 and H93 together coordinate heme b.

Belongs to the globin family. Heterotetramer of two alpha chains and two epsilon chains in early embryonic hemoglobin Gower-2; two zeta chains and two epsilon chains in early embryonic hemoglobin Gower-1. In terms of tissue distribution, red blood cells.

Its function is as follows. The epsilon chain is a beta-type chain of early mammalian embryonic hemoglobin. This is Hemoglobin subunit epsilon (HBE1) from Sminthopsis crassicaudata (Fat-tailed dunnart).